The chain runs to 221 residues: Urease accessory protein UreF (221 aa).

This sequence belongs to the UreF family. As to quaternary structure, ureD, UreF and UreG form a complex that acts as a GTP-hydrolysis-dependent molecular chaperone, activating the urease apoprotein by helping to assemble the nickel containing metallocenter of UreC. The UreE protein probably delivers the nickel.

It is found in the cytoplasm. Its function is as follows. Required for maturation of urease via the functional incorporation of the urease nickel metallocenter. This chain is Urease accessory protein UreF, found in Vibrio parahaemolyticus.